Consider the following 225-residue polypeptide: Fibroblast growth factor 11 (225 aa).

The interval 1–28 (MAALASSLIRQKREVREPGGSRPVSAQR) is disordered.

The protein belongs to the heparin-binding growth factors family. In terms of tissue distribution, brain and eye, and in a segmental pattern of the embryonic body wall. In adult olfactory bulb, hippocampus and most concentrated in Purkinje cell layer of the cerebellum.

Its subcellular location is the nucleus. Its function is as follows. Probably involved in nervous system development and function. The sequence is that of Fibroblast growth factor 11 (Fgf11) from Mus musculus (Mouse).